Here is a 344-residue protein sequence, read N- to C-terminus: Molybdate/tungstate import ATP-binding protein WtpC (344 aa).

The region spanning 2 to 231 (LRVESVSKDY…PVDEGVARFL (230 aa)) is the ABC transporter domain. 33–40 (GPSGAGKT) is a binding site for ATP. In terms of domain architecture, Mop spans 280-344 (KTSARNEFRA…SFKTSAIKVF (65 aa)).

It belongs to the ABC transporter superfamily. Sulfate/tungstate importer (TC 3.A.1.6) family. The complex is composed of two ATP-binding proteins (WtpC), two transmembrane proteins (WtpB) and a solute-binding protein (WtpA).

It is found in the cell membrane. It catalyses the reaction tungstate(in) + ATP + H2O = tungstate(out) + ADP + phosphate + H(+). In terms of biological role, part of the ABC transporter complex WtpABC involved in molybdate/tungstate import. Responsible for energy coupling to the transport system. This is Molybdate/tungstate import ATP-binding protein WtpC (wtpC) from Pyrococcus abyssi (strain GE5 / Orsay).